The following is a 273-amino-acid chain: Large ribosomal subunit protein uL2cz/uL2cy (273 aa).

2 disordered regions span residues 1 to 22 and 225 to 273; these read MAKH…DRQV and PVDH…RRRK.

This sequence belongs to the universal ribosomal protein uL2 family. As to quaternary structure, part of the 50S ribosomal subunit.

It is found in the plastid. The protein resides in the chloroplast. The polypeptide is Large ribosomal subunit protein uL2cz/uL2cy (rpl2-A) (Saccharum hybrid (Sugarcane)).